The sequence spans 213 residues: Probable RNA 2'-phosphotransferase (213 aa).

The protein belongs to the KptA/TPT1 family.

Removes the 2'-phosphate from RNA via an intermediate in which the phosphate is ADP-ribosylated by NAD followed by a presumed transesterification to release the RNA and generate ADP-ribose 1''-2''-cyclic phosphate (APPR&gt;P). May function as an ADP-ribosylase. The polypeptide is Probable RNA 2'-phosphotransferase (Pyrobaculum aerophilum (strain ATCC 51768 / DSM 7523 / JCM 9630 / CIP 104966 / NBRC 100827 / IM2)).